The following is a 420-amino-acid chain: MNLLVVGSGGREHAISKKLLESNNVENVYCAPGNDGMRLDNIQLVAISETDKAGLIDFAKKAEIAFVIVGPEVPLLEGVVDALEEAGIKAFGPKANAALIEGSKDFAKQFMEKYAIPTAASKTFTDYAEAKAYLDERGVPIVIKADGLAAGKGVTVALEMEEAVLALKDMMLEEKFGDASLKVVIEDFLAGEEFSLMAFVNGEEVYPMAIAQDHKRAYEGDKGPNTGGMGAYSPVPHISETVVDEAVEKILLPAAKGMVKEGRYFRGILYAGLILTAEGPKVIEFNARFGDPETQVVLPRLESDFAALIDALLHNEKPDVRFKKSGITLGVVLASAGYPEHYEKGNKLTGLNDVAEDVAIYHAGTKQDENDDFISDGGRVLLLAKEAETMTDARTLLYPEMQKLDNPNFFYRIDIGTKAE.

The ATP-grasp domain occupies 108 to 314; it reads KQFMEKYAIP…FAALIDALLH (207 aa). 134–195 is a binding site for ATP; that stretch reads LDERGVPIVI…EDFLAGEEFS (62 aa). The Mg(2+) site is built by glutamate 284 and asparagine 286.

It belongs to the GARS family. It depends on Mg(2+) as a cofactor. Requires Mn(2+) as cofactor.

It catalyses the reaction 5-phospho-beta-D-ribosylamine + glycine + ATP = N(1)-(5-phospho-beta-D-ribosyl)glycinamide + ADP + phosphate + H(+). It functions in the pathway purine metabolism; IMP biosynthesis via de novo pathway; N(1)-(5-phospho-D-ribosyl)glycinamide from 5-phospho-alpha-D-ribose 1-diphosphate: step 2/2. In Listeria monocytogenes serotype 4b (strain F2365), this protein is Phosphoribosylamine--glycine ligase.